The primary structure comprises 139 residues: Large ribosomal subunit protein uL22 (139 aa).

The interval 1–21 is disordered; that stretch reads MTAPTPEFRNKKQRKQQVKLR.

It belongs to the universal ribosomal protein uL22 family. Part of the 50S ribosomal subunit.

This protein binds specifically to 23S rRNA; its binding is stimulated by other ribosomal proteins, e.g. L4, L17, and L20. It is important during the early stages of 50S assembly. It makes multiple contacts with different domains of the 23S rRNA in the assembled 50S subunit and ribosome. Functionally, the globular domain of the protein is located near the polypeptide exit tunnel on the outside of the subunit, while an extended beta-hairpin is found that lines the wall of the exit tunnel in the center of the 70S ribosome. This chain is Large ribosomal subunit protein uL22, found in Deinococcus deserti (strain DSM 17065 / CIP 109153 / LMG 22923 / VCD115).